A 960-amino-acid polypeptide reads, in one-letter code: Chromo domain-containing protein 1 (960 aa).

One can recognise a Chromo domain in the interval 22 to 74 (YEVEDILADRVNKNGINEYYIKWAGYDWYDNTWEPEQNLFGAEKVLKKWKKRK).

Ago1, chp1 and tas3 interact to form the core of the RNA-induced transcriptional silencing (RITS) complex. The RITS complex interacts with the RDRC complex via interaction between ago1 and hrr1. Clr4 has a role in mediating this interaction. Interacts with dri1.

The protein resides in the nucleus. The protein localises to the cytoplasm. It is found in the cytoskeleton. It localises to the microtubule organizing center. Its subcellular location is the spindle pole body. Its function is as follows. Component of the kinetochore which plays a role in stabilizing microtubules and so allowing accurate chromosome segregation. Has a role in the RNA interference (RNAi) pathway which is important for heterochromatin formation and accurate chromosome segregation. A member of the RNA-induced transcriptional silencing (RITS) complex which is involved in the biosynthesis of dsRNA from primer siRNAs provided by the RNA-directed RNA polymerase (RDRC) complex. The polypeptide is Chromo domain-containing protein 1 (Schizosaccharomyces pombe (strain 972 / ATCC 24843) (Fission yeast)).